Here is a 79-residue protein sequence, read N- to C-terminus: D-alanyl carrier protein (79 aa).

Residues 1–77 form the Carrier domain; it reads MDIKSEVIEI…KIIAGIVELQ (77 aa). Ser-35 bears the O-(pantetheine 4'-phosphoryl)serine mark.

It belongs to the DltC family. 4'-phosphopantetheine is transferred from CoA to a specific serine of apo-DCP.

It is found in the cytoplasm. The protein operates within cell wall biogenesis; lipoteichoic acid biosynthesis. Functionally, carrier protein involved in the D-alanylation of lipoteichoic acid (LTA). The loading of thioester-linked D-alanine onto DltC is catalyzed by D-alanine--D-alanyl carrier protein ligase DltA. The DltC-carried D-alanyl group is further transferred to cell membrane phosphatidylglycerol (PG) by forming an ester bond, probably catalyzed by DltD. D-alanylation of LTA plays an important role in modulating the properties of the cell wall in Gram-positive bacteria, influencing the net charge of the cell wall. In Streptococcus pneumoniae serotype 2 (strain D39 / NCTC 7466), this protein is D-alanyl carrier protein.